Consider the following 63-residue polypeptide: Large ribosomal subunit protein bL28 (63 aa).

The protein belongs to the bacterial ribosomal protein bL28 family.

This chain is Large ribosomal subunit protein bL28, found in Geotalea daltonii (strain DSM 22248 / JCM 15807 / FRC-32) (Geobacter daltonii).